The chain runs to 174 residues: Beta-lactoglobulin (174 aa).

A signal peptide spans 1 to 18 (MKFLLLTVGLTSICAIQA). Disulfide bonds link cysteine 79–cysteine 172 and cysteine 122–cysteine 134.

It belongs to the calycin superfamily. Lipocalin family. Monomer.

It localises to the secreted. Lactoglobulin is the primary component of whey, it binds retinol and is probably involved in the transport of that molecule. This is Beta-lactoglobulin (LGB) from Trichosurus vulpecula (Brush-tailed possum).